A 217-amino-acid polypeptide reads, in one-letter code: Protein-L-isoaspartate O-methyltransferase 2 (217 aa).

Serine 64 is a catalytic residue.

This sequence belongs to the methyltransferase superfamily. L-isoaspartyl/D-aspartyl protein methyltransferase family.

It localises to the cytoplasm. It catalyses the reaction [protein]-L-isoaspartate + S-adenosyl-L-methionine = [protein]-L-isoaspartate alpha-methyl ester + S-adenosyl-L-homocysteine. In terms of biological role, catalyzes the methyl esterification of L-isoaspartyl residues in peptides and proteins that result from spontaneous decomposition of normal L-aspartyl and L-asparaginyl residues. It plays a role in the repair and/or degradation of damaged proteins. In Rhodopseudomonas palustris (strain HaA2), this protein is Protein-L-isoaspartate O-methyltransferase 2.